The primary structure comprises 737 residues: Zinc finger protein 280C (737 aa).

Glycyl lysine isopeptide (Lys-Gly) (interchain with G-Cter in SUMO2) cross-links involve residues Lys5, Lys10, Lys14, Lys33, and Lys55. The segment covering 57–66 has biased composition (polar residues); sequence AISNILNRGH. A disordered region spans residues 57 to 137; sequence AISNILNRGH…DFTKNSQVGS (81 aa). Residue Lys75 forms a Glycyl lysine isopeptide (Lys-Gly) (interchain with G-Cter in SUMO2) linkage. A Phosphoserine modification is found at Ser80. Positions 112–123 are enriched in polar residues; the sequence is SKSSQSSVTVEN. Glycyl lysine isopeptide (Lys-Gly) (interchain with G-Cter in SUMO2) cross-links involve residues Lys113, Lys126, Lys167, Lys174, Lys180, and Lys187. Polar residues predominate over residues 176–185; that stretch reads PSTSKVNSVT. The tract at residues 176–223 is disordered; it reads PSTSKVNSVTPKKPKTSEDVPQINPSTSLPLIGSPPVTSSQVMLSKGT. The segment covering 211–223 has biased composition (polar residues); the sequence is PVTSSQVMLSKGT. Thr223 bears the Phosphothreonine mark. Ser227 is subject to Phosphoserine. Lys273 participates in a covalent cross-link: Glycyl lysine isopeptide (Lys-Gly) (interchain with G-Cter in SUMO2). C2H2-type zinc fingers lie at residues 316–338, 353–376, 383–406, 413–436, and 470–492; these read FKCFSCSKVLKNNIRFMNHMKHH, TTCQHCYRQYPTPFQLQCHIESTH, TICKICELSFETEHILLQHMKDTH, YVCQVCQFRSSTFSDVEAHFRAAH, and HRCPKCRLQFLTSKEKAEHKAQH. Lys522 participates in a covalent cross-link: Glycyl lysine isopeptide (Lys-Gly) (interchain with G-Cter in SUMO2). Over residues 535-579 the composition is skewed to polar residues; it reads SFLQVTPPTSQNTTARNPRKSNASRSKTSKLHATTSTASKVNTSK. Residues 535–602 are disordered; that stretch reads SFLQVTPPTS…YKQKRQRNRK (68 aa). Residue Thr540 is modified to Phosphothreonine. Glycyl lysine isopeptide (Lys-Gly) (interchain with G-Cter in SUMO2) cross-links involve residues Lys564 and Lys574. Residues 580–602 are compositionally biased toward basic residues; sequence PRGRIAKSKAKPSYKQKRQRNRK.

Its subcellular location is the nucleus. May function as a transcription factor. The protein is Zinc finger protein 280C (ZNF280C) of Homo sapiens (Human).